A 548-amino-acid chain; its full sequence is Membrane protein insertase YidC (548 aa).

Helical transmembrane passes span 6–26, 349–369, 424–444, 455–475, and 503–523; these read NLIL…WESD, TVFQ…TLLV, LGGC…YWAL, FALW…PILM, and PIIF…YWLV.

The protein belongs to the OXA1/ALB3/YidC family. Type 1 subfamily. In terms of assembly, interacts with the Sec translocase complex via SecD. Specifically interacts with transmembrane segments of nascent integral membrane proteins during membrane integration.

It is found in the cell inner membrane. Its function is as follows. Required for the insertion and/or proper folding and/or complex formation of integral membrane proteins into the membrane. Involved in integration of membrane proteins that insert both dependently and independently of the Sec translocase complex, as well as at least some lipoproteins. Aids folding of multispanning membrane proteins. This Aeromonas salmonicida (strain A449) protein is Membrane protein insertase YidC.